A 293-amino-acid chain; its full sequence is MSLNFQEIIATLNQFWRDRGCLIAQPYDTEKGAGTMNHHTFLRAIGPEPWSVAYVEPCRRPTDGRYGENPNRVQHYFQYQVIIKPSPDNIQEIYLDSLKALGIQPEDHDIRFVEDNWESPTLGAWGVGWEVWLDGMEITQFTYFQQCGGLDCRPVCIEITYGLERLAMYLQEVDAITKIRWNETTSYGDIFLQSEIEQCTYNFEASNPEMLFQLFSLYEAEAQQLIEKGLVMPSLDYVLKCSHTFNLLDARGVIAVAERTRYIGRIRHMARQVAHLYLAQREELGFPLQKAIA.

It belongs to the class-II aminoacyl-tRNA synthetase family. Tetramer of two alpha and two beta subunits.

Its subcellular location is the cytoplasm. It carries out the reaction tRNA(Gly) + glycine + ATP = glycyl-tRNA(Gly) + AMP + diphosphate. The protein is Glycine--tRNA ligase alpha subunit of Picosynechococcus sp. (strain ATCC 27264 / PCC 7002 / PR-6) (Agmenellum quadruplicatum).